A 1127-amino-acid chain; its full sequence is Structural protein MDM1 (1127 aa).

The PXA domain maps to 85–273 (NAQIGKELES…WNLRIVSLSQ (189 aa)). 3 positions are modified to phosphoserine: Ser670, Ser673, and Ser692. Positions 705–762 (SNNFRDNIASLTISIDQIEKELELLRHLILKADLTNNQMQLKILKKSQRTLLKELEMK) form a coiled coil. One can recognise a PX domain in the interval 782-905 (TKIYIRSYFS…RFLTDPTPFK (124 aa)).

This sequence belongs to the sorting nexin family.

The protein localises to the cytoplasm. Functionally, essential for mitotic growth. Mediates organelle inheritance. This chain is Structural protein MDM1 (MDM1), found in Saccharomyces cerevisiae (strain ATCC 204508 / S288c) (Baker's yeast).